A 405-amino-acid chain; its full sequence is Intraflagellar transport protein 57 homolog (405 aa).

A coiled-coil region spans residues 252–380 (ETLKTNILEN…AQLNLEVALL (129 aa)).

The protein belongs to the IFT57 family.

The protein localises to the cytoplasm. The protein resides in the cytoskeleton. It is found in the cilium basal body. Functionally, required for the formation of cilia. This chain is Intraflagellar transport protein 57 homolog, found in Drosophila melanogaster (Fruit fly).